The chain runs to 163 residues: Protein FAM167B (163 aa).

Positions F73 to E132 form a coiled coil.

This sequence belongs to the FAM167 (SEC) family.

The chain is Protein FAM167B (FAM167B) from Homo sapiens (Human).